Reading from the N-terminus, the 435-residue chain is Adenylosuccinate synthetase (435 aa).

GTP contacts are provided by residues Gly17–Lys23 and Gly45–Thr47. Residue Asp18 is the Proton acceptor of the active site. Residues Asp18 and Gly45 each coordinate Mg(2+). IMP is bound by residues Asp18 to Lys21, Asn43 to His46, Thr135, Arg149, Gln230, Thr245, and Arg309. His46 (proton donor) is an active-site residue. Substrate is bound at residue Thr305–Arg311. GTP contacts are provided by residues Arg311, Leu337–Asp339, and Ser419–Gly421.

It belongs to the adenylosuccinate synthetase family. Homodimer. It depends on Mg(2+) as a cofactor.

It localises to the cytoplasm. The catalysed reaction is IMP + L-aspartate + GTP = N(6)-(1,2-dicarboxyethyl)-AMP + GDP + phosphate + 2 H(+). Its pathway is purine metabolism; AMP biosynthesis via de novo pathway; AMP from IMP: step 1/2. In terms of biological role, plays an important role in the de novo pathway of purine nucleotide biosynthesis. Catalyzes the first committed step in the biosynthesis of AMP from IMP. This is Adenylosuccinate synthetase from Spiroplasma citri.